We begin with the raw amino-acid sequence, 69 residues long: Cytochrome c oxidase subunit 8A, mitochondrial (69 aa).

The N-terminal 25 residues, M1 to K25, are a transit peptide targeting the mitochondrion. An SIFI-degron motif is present at residues S2 to L19. At I26–G36 the chain is on the mitochondrial matrix side. Residues I37–S60 traverse the membrane as a helical segment. Residues H61–E69 lie on the Mitochondrial intermembrane side of the membrane.

The protein belongs to the cytochrome c oxidase VIII family. As to quaternary structure, component of the cytochrome c oxidase (complex IV, CIV), a multisubunit enzyme composed of 14 subunits. The complex is composed of a catalytic core of 3 subunits MT-CO1, MT-CO2 and MT-CO3, encoded in the mitochondrial DNA, and 11 supernumerary subunits COX4I, COX5A, COX5B, COX6A, COX6B, COX6C, COX7A, COX7B, COX7C, COX8 and NDUFA4, which are encoded in the nuclear genome. The complex exists as a monomer or a dimer and forms supercomplexes (SCs) in the inner mitochondrial membrane with NADH-ubiquinone oxidoreductase (complex I, CI) and ubiquinol-cytochrome c oxidoreductase (cytochrome b-c1 complex, complex III, CIII), resulting in different assemblies (supercomplex SCI(1)III(2)IV(1) and megacomplex MCI(2)III(2)IV(2)). Post-translationally, in response to mitochondrial stress, the precursor protein is ubiquitinated by the SIFI complex in the cytoplasm before mitochondrial import, leading to its degradation. Within the SIFI complex, UBR4 initiates ubiquitin chain that are further elongated or branched by KCMF1.

The protein localises to the mitochondrion inner membrane. It participates in energy metabolism; oxidative phosphorylation. Its function is as follows. Component of the cytochrome c oxidase, the last enzyme in the mitochondrial electron transport chain which drives oxidative phosphorylation. The respiratory chain contains 3 multisubunit complexes succinate dehydrogenase (complex II, CII), ubiquinol-cytochrome c oxidoreductase (cytochrome b-c1 complex, complex III, CIII) and cytochrome c oxidase (complex IV, CIV), that cooperate to transfer electrons derived from NADH and succinate to molecular oxygen, creating an electrochemical gradient over the inner membrane that drives transmembrane transport and the ATP synthase. Cytochrome c oxidase is the component of the respiratory chain that catalyzes the reduction of oxygen to water. Electrons originating from reduced cytochrome c in the intermembrane space (IMS) are transferred via the dinuclear copper A center (CU(A)) of subunit 2 and heme A of subunit 1 to the active site in subunit 1, a binuclear center (BNC) formed by heme A3 and copper B (CU(B)). The BNC reduces molecular oxygen to 2 water molecules using 4 electrons from cytochrome c in the IMS and 4 protons from the mitochondrial matrix. This Gorilla gorilla gorilla (Western lowland gorilla) protein is Cytochrome c oxidase subunit 8A, mitochondrial (COX8A).